The following is a 391-amino-acid chain: Salivary protein TRIO (391 aa).

An N-terminal signal peptide occupies residues 1–24 (MCRGLSAVLILLVSLSAQLHVVVG). The N-linked (GlcNAc...) asparagine glycan is linked to N323.

As to expression, female salivary gland (at protein level). Female saliva (at protein level). Not detected in female midgut, head and carcass (at protein level). Not detected in male tissues (at protein level).

Its subcellular location is the secreted. Its function is as follows. Required for efficient probing on a mammalian host. Alters the local inflammatory response in the host skin following a mosquito bite by suppressing TNF-alpha/TNF expression. Functionally, (Microbial infection) Contributes to optimal transmission of Plasmodium berghei sporozoites to mice. (Microbial infection) Contributes to optimal transmission of Plasmodium falciparum sporozoites to mammalian host. The chain is Salivary protein TRIO from Anopheles gambiae (African malaria mosquito).